Here is a 153-residue protein sequence, read N- to C-terminus: MEKLDKLSEAFKALLKQEKFGSQSEIVTALQELGFENINQSKVSRMLSKFGAVRTRNTKMEMVYQLPAELGVPTTSSPLKNLVVDIDHNDVLIVVKTSPGAAQLIARLLDSMGKSGGILGTIAGDDTIFITPTKVTPVEVLMQNVTELFESSF.

It belongs to the ArgR family.

It is found in the cytoplasm. The protein operates within amino-acid biosynthesis; L-arginine biosynthesis [regulation]. Its function is as follows. Regulates arginine biosynthesis genes. The sequence is that of Arginine repressor from Actinobacillus pleuropneumoniae serotype 3 (strain JL03).